The following is a 201-amino-acid chain: Holliday junction resolvase RecU (201 aa).

Residues Thr-85, Asp-87, Asp-100, and Gln-119 each contribute to the Mg(2+) site.

The protein belongs to the RecU family. Requires Mg(2+) as cofactor.

The protein resides in the cytoplasm. It catalyses the reaction Endonucleolytic cleavage at a junction such as a reciprocal single-stranded crossover between two homologous DNA duplexes (Holliday junction).. Endonuclease that resolves Holliday junction intermediates in genetic recombination. Cleaves mobile four-strand junctions by introducing symmetrical nicks in paired strands. Promotes annealing of linear ssDNA with homologous dsDNA. Required for DNA repair, homologous recombination and chromosome segregation. The protein is Holliday junction resolvase RecU of Pediococcus pentosaceus (strain ATCC 25745 / CCUG 21536 / LMG 10740 / 183-1w).